The chain runs to 745 residues: Putative cryptochrome DASH, mitochondrial (745 aa).

A mitochondrion-targeting transit peptide spans 1 to 22 (MAPSKVVIYAMRRELRLSDNPI). In terms of domain architecture, Photolyase/cryptochrome alpha/beta spans 23-166 (FHHLSNPESK…DFKLWDDEKY (144 aa)). 2 disordered regions span residues 563-688 (KFNL…GGGG) and 702-745 (GGYR…QTDA). The segment covering 571 to 584 (SKVKKRPFFRKRGT) has biased composition (basic residues). A compositionally biased stretch (low complexity) spans 591-603 (GSAESPGSSDSHS). Residues 604 to 616 (GSGGSPDGSGGGN) are compositionally biased toward gly residues. The segment covering 632–648 (QQTHQGSGRSQSSSNHG) has biased composition (low complexity). Composition is skewed to gly residues over residues 672 to 688 (RGGG…GGGG) and 702 to 718 (GGYR…GGFR). The segment covering 735–745 (QQVASQFQTDA) has biased composition (polar residues).

Belongs to the DNA photolyase class-1 family. FAD serves as cofactor. Requires (6R)-5,10-methylene-5,6,7,8-tetrahydrofolate as cofactor.

The protein resides in the mitochondrion. In terms of biological role, may have a photoreceptor function. The polypeptide is Putative cryptochrome DASH, mitochondrial (cry) (Neurospora crassa (strain ATCC 24698 / 74-OR23-1A / CBS 708.71 / DSM 1257 / FGSC 987)).